The chain runs to 739 residues: Vascular cell adhesion protein 1 (739 aa).

The first 24 residues, 1-24 (MPVKMVAIFGASTVLWILFAVSQA), serve as a signal peptide directing secretion. 7 Ig-like C2-type domains span residues 25–111 (FKIE…IQVD), 119–212 (PEIQ…KERE), 223–309 (PKNT…LIVQ), 312–397 (PFTV…KTIQ), 408–506 (EIEI…QTLY), 514–595 (PTIW…VELI), and 601–682 (KDIQ…RSLT). Residues 25–698 (FKIEISPEYK…ENNKDYFSPE (674 aa)) lie on the Extracellular side of the membrane. Intrachain disulfides connect C47–C95, C52–C99, C137–C195, C246–C291, and C335–C383. N-linked (GlcNAc...) asparagine glycosylation occurs at N273. 4 N-linked (GlcNAc...) asparagine glycosylation sites follow: N424, N531, N561, and N650. C534 and C579 are disulfide-bonded. The chain crosses the membrane as a helical span at residues 699–720 (LLALYFASSLVIPAIGMIIYFA). Over 721-739 (RKANMKGSYSLVEAQKSKV) the chain is Cytoplasmic.

As to quaternary structure, binds to ECMV-D capsid proteins and acts as a receptor for this virus. In terms of processing, cleaved by the metalloproteinase ADAM17 to generate the soluble form. Post-translationally, sialoglycoprotein. Ubiquitinated by TRIM65 via 'Lys-48'-linked ubiquitination; leading to proteasomal degradation. Expressed in aortic endothelial cells, with low expression in the descending thoracic aorta and the outer curvature of the aortic arch, where pulsatory shear stress exists, and high in the inner curvature of the aortic arch, where oscillatory shear stress prevails (at protein level). Expressed on inflamed vascular endothelium, as well as on macrophage-like and dendritic cell types in both normal and inflamed tissue.

Its subcellular location is the cell membrane. The protein localises to the secreted. Its function is as follows. Cell adhesion glycoprotein predominantly expressed on the surface of endothelial cells that plays an important role in immune surveillance and inflammation. Acts as a major regulator of leukocyte adhesion to the endothelium through interaction with different types of integrins. During inflammatory responses, binds ligands on the surface of activated endothelial cells to initiate the activation of calcium channels and the plasma membrane-associated small GTPase RAC1 leading to leukocyte transendothelial migration. Also serves as a quality-control checkpoint for entry into bone marrow by providing a 'don't-eat-me' stamping in the context of major histocompatibility complex (MHC) class-I presentation. The chain is Vascular cell adhesion protein 1 (Vcam1) from Rattus norvegicus (Rat).